We begin with the raw amino-acid sequence, 615 residues long: Dihydroxy-acid dehydratase (615 aa).

Position 85 (D85) interacts with Mg(2+). C126 lines the [2Fe-2S] cluster pocket. Mg(2+)-binding residues include D127 and K128. K128 is modified (N6-carboxylysine). C199 provides a ligand contact to [2Fe-2S] cluster. Residue E495 coordinates Mg(2+). S521 (proton acceptor) is an active-site residue.

This sequence belongs to the IlvD/Edd family. In terms of assembly, homodimer. [2Fe-2S] cluster is required as a cofactor. Requires Mg(2+) as cofactor.

It catalyses the reaction (2R)-2,3-dihydroxy-3-methylbutanoate = 3-methyl-2-oxobutanoate + H2O. It carries out the reaction (2R,3R)-2,3-dihydroxy-3-methylpentanoate = (S)-3-methyl-2-oxopentanoate + H2O. Its pathway is amino-acid biosynthesis; L-isoleucine biosynthesis; L-isoleucine from 2-oxobutanoate: step 3/4. The protein operates within amino-acid biosynthesis; L-valine biosynthesis; L-valine from pyruvate: step 3/4. Its function is as follows. Functions in the biosynthesis of branched-chain amino acids. Catalyzes the dehydration of (2R,3R)-2,3-dihydroxy-3-methylpentanoate (2,3-dihydroxy-3-methylvalerate) into 2-oxo-3-methylpentanoate (2-oxo-3-methylvalerate) and of (2R)-2,3-dihydroxy-3-methylbutanoate (2,3-dihydroxyisovalerate) into 2-oxo-3-methylbutanoate (2-oxoisovalerate), the penultimate precursor to L-isoleucine and L-valine, respectively. The sequence is that of Dihydroxy-acid dehydratase from Mannheimia succiniciproducens (strain KCTC 0769BP / MBEL55E).